The sequence spans 364 residues: Fructose-bisphosphate aldolase, non-muscle type (364 aa).

2 residues coordinate substrate: arginine 56 and lysine 147. Residue lysine 230 is the Schiff-base intermediate with dihydroxyacetone-P of the active site.

This sequence belongs to the class I fructose-bisphosphate aldolase family. In terms of assembly, homotetramer. In terms of tissue distribution, expressed mainly in the liver and also in brain and other tissues, except for the heart muscle.

It carries out the reaction beta-D-fructose 1,6-bisphosphate = D-glyceraldehyde 3-phosphate + dihydroxyacetone phosphate. Its pathway is carbohydrate degradation; glycolysis; D-glyceraldehyde 3-phosphate and glycerone phosphate from D-glucose: step 4/4. This Lethenteron camtschaticum (Japanese lamprey) protein is Fructose-bisphosphate aldolase, non-muscle type.